The chain runs to 762 residues: Probable inorganic carbon transporter subunit DabA (762 aa).

4 residues coordinate Zn(2+): cysteine 279, aspartate 281, histidine 461, and cysteine 476.

Belongs to the inorganic carbon transporter (TC 9.A.2) DabA family. Forms a complex with DabB. The cofactor is Zn(2+).

The protein localises to the cell inner membrane. Part of an energy-coupled inorganic carbon pump. The sequence is that of Probable inorganic carbon transporter subunit DabA from Legionella pneumophila subsp. pneumophila (strain Philadelphia 1 / ATCC 33152 / DSM 7513).